The primary structure comprises 238 residues: uncharacterized protein (238 aa).

This is an uncharacterized protein from Frog virus 3 (isolate Goorha) (FV-3).